Consider the following 392-residue polypeptide: NAD(P)H-quinone oxidoreductase subunit H (392 aa).

This sequence belongs to the complex I 49 kDa subunit family. As to quaternary structure, NDH-1 can be composed of about 15 different subunits; different subcomplexes with different compositions have been identified which probably have different functions.

The protein localises to the cellular thylakoid membrane. The enzyme catalyses a plastoquinone + NADH + (n+1) H(+)(in) = a plastoquinol + NAD(+) + n H(+)(out). The catalysed reaction is a plastoquinone + NADPH + (n+1) H(+)(in) = a plastoquinol + NADP(+) + n H(+)(out). Its function is as follows. NDH-1 shuttles electrons from an unknown electron donor, via FMN and iron-sulfur (Fe-S) centers, to quinones in the respiratory and/or the photosynthetic chain. The immediate electron acceptor for the enzyme in this species is believed to be plastoquinone. Couples the redox reaction to proton translocation, and thus conserves the redox energy in a proton gradient. Cyanobacterial NDH-1 also plays a role in inorganic carbon-concentration. This chain is NAD(P)H-quinone oxidoreductase subunit H, found in Synechococcus sp. (strain JA-2-3B'a(2-13)) (Cyanobacteria bacterium Yellowstone B-Prime).